Here is a 294-residue protein sequence, read N- to C-terminus: NAD kinase (294 aa).

D73 serves as the catalytic Proton acceptor. NAD(+) contacts are provided by residues 73 to 74, 147 to 148, R175, D177, and 188 to 193; these read DG, ND, and TAYALS.

This sequence belongs to the NAD kinase family. The cofactor is a divalent metal cation.

The protein localises to the cytoplasm. The catalysed reaction is NAD(+) + ATP = ADP + NADP(+) + H(+). In terms of biological role, involved in the regulation of the intracellular balance of NAD and NADP, and is a key enzyme in the biosynthesis of NADP. Catalyzes specifically the phosphorylation on 2'-hydroxyl of the adenosine moiety of NAD to yield NADP. In Nitrosospira multiformis (strain ATCC 25196 / NCIMB 11849 / C 71), this protein is NAD kinase.